The chain runs to 45 residues: Small polypeptide DEVIL 23 (45 aa).

Positions 13–44 are required for DVL/RTFL small polypeptide activity; that stretch reads KSTLRCWDWCKEQRTRAYIIWRCLIFLLRWDD. A helical transmembrane segment spans residues 22-39; it reads CKEQRTRAYIIWRCLIFL.

It belongs to the DVL/RTFL small polypeptides family.

It is found in the cell membrane. Functionally, small polypeptide acting as a regulatory molecule which coordinates cellular responses required for differentiation, growth and development, probably by restricting polar cell proliferation in lateral organs and coordinating socket cell recruitment and differentiation at trichome sites. The protein is Small polypeptide DEVIL 23 of Arabidopsis thaliana (Mouse-ear cress).